The chain runs to 274 residues: Long chain fatty acid elongase 6 (274 aa).

Topologically, residues 1–30 (MPQGEVSFFEVLTTAPFSHELSKKHIAQTQ) are extracellular. A helical membrane pass occupies residues 31–51 (YAAFWISMAYVVVIFGLKAVM). The Cytoplasmic portion of the chain corresponds to 52–69 (TNRKPFDLTGPLNLWNAG). A helical membrane pass occupies residues 70–90 (LAIFSTLGSLATTFGLLHEFF). Over 91 to 111 (SRGFFESYIHIGDFYNGLSGM) the chain is Extracellular. The helical transmembrane segment at 112 to 132 (FTWLFVLSKVAEFGDTLFIIL) threads the bilayer. Residues 133–135 (RKK) are Cytoplasmic-facing. The helical transmembrane segment at 136–156 (PLMFLHWYHHVLTMNYAFMSF) threads the bilayer. Residues 157–159 (EAN) are Extracellular-facing. The chain crosses the membrane as a helical span at residues 160 to 180 (LGFNTWITWMNFSVHSIMYGY). At 181 to 202 (YMLRSFGVKVPAWIAKNITTMQ) the chain is on the cytoplasmic side. The helical transmembrane segment at 203–223 (ILQFVITHFILFHVGYLAVTG) threads the bilayer. At 224–230 (QSVDSTP) the chain is on the extracellular side. A helical membrane pass occupies residues 231–251 (GYYWFCLLMEISYVVLFGNFY). Residues 252–274 (YQSYIKGGGKKFNAEKKTEKKIE) lie on the Cytoplasmic side of the membrane.

The protein belongs to the ELO family. In terms of tissue distribution, expressed in the gut, neurons, pharynx and muscles of the vulva.

Its subcellular location is the membrane. It catalyses the reaction isopentadecanoyl-CoA + malonyl-CoA + H(+) = 3-oxoisoheptadecanoyl-CoA + CO2 + CoA. It participates in lipid metabolism; fatty acid biosynthesis. Catalyzes the first and rate-limiting reaction of the four reactions that constitute the long-chain fatty acids elongation cycle. Uses malonyl-CoA to add 2 carbons per cycle to the chain of long-chain fatty acids. Condensing enzyme required for the formation of isoheptadecanoate (C17iso), which plays critical roles in animal development and growth. The polypeptide is Long chain fatty acid elongase 6 (elo-6) (Caenorhabditis elegans).